Here is a 481-residue protein sequence, read N- to C-terminus: Leukocyte immunoglobulin-like receptor subfamily A member 6 (481 aa).

The N-terminal stretch at 1-23 (MTPALTALLCLGLSLGPRTHVQA) is a signal peptide. The 95-residue stretch at 24–118 (GPLPKPTLWA…PSDPLELVVT (95 aa)) folds into the Ig-like C2-type 1 domain. The Extracellular segment spans residues 24–447 (GPLPKPTLWA…SHAKDYTVEN (424 aa)). C49 and C98 form a disulfide bridge. An N-linked (GlcNAc...) asparagine glycan is attached at N139. Cystine bridges form between C144-C196 and C245-C296. Ig-like C2-type domains lie at 225–314 (PSLL…DPLN) and 323–408 (DRVS…HLLS). N-linked (GlcNAc...) asparagine glycans are attached at residues N301 and N340. The cysteines at positions 345 and 396 are disulfide-linked. Residues 418 to 439 (VSGPSGGPSLPPTGPPSTPASH) form a disordered region. Residues 426–435 (SLPPTGPPST) are compositionally biased toward pro residues. Residues 448-468 (LIRMGMAGLVLVVLGILLFEA) traverse the membrane as a helical segment. Residues 469 to 481 (QHSQRSPQDAARR) are Cytoplasmic-facing.

It localises to the membrane. Its function is as follows. May act as receptor for class I MHC antigens. The polypeptide is Leukocyte immunoglobulin-like receptor subfamily A member 6 (LILRA6) (Pan troglodytes (Chimpanzee)).